The following is a 1119-amino-acid chain: Transient receptor potential cation channel subfamily A member 1 (1119 aa).

Over 1–718 the chain is Cytoplasmic; that stretch reads MKRSLRKMWR…MKWLAYGFRA (718 aa). ANK repeat units follow at residues 62–92, 97–126, 130–160, 164–193, 197–226, 238–267, 271–301, 308–337, 341–370, 374–403, 412–441, 445–474, 481–510, 513–542, 547–576, and 579–609; these read MDTF…EVLH, YGNT…NPNL, NMMA…DVNL, NGNT…KPCK, WGCF…EHGY, GKAT…QIDP, GRCT…SVDI, CHET…DINK, EGRS…QVDI, FGRN…QQIK, DGCT…SIHS, DKKS…DTRL, HGMT…LFLS, NGWT…KCTD, DGNT…DIVL, and QQAS…DECL. Intrachain disulfides connect Cys192-Cys665, Cys462-Cys665, Cys608-Cys621, Cys621-Cys665, and Cys633-Cys856. Pro394 carries the 4-hydroxyproline; by EGLN1; transient; in normoxia and hyperoxia modification. The (E)-cinnamaldehyde site is built by Cys414 and Cys421. Cys621 contacts (E)-cinnamaldehyde. Cys633 is modified (cysteine sulfenic acid (-SOH); transient; in hyperoxia). The (E)-cinnamaldehyde site is built by Cys641, Cys665, and Lys710. The chain crosses the membrane as a helical span at residues 719-739; the sequence is HMMNLGSYCLGLIPMTILVVN. The Extracellular portion of the chain corresponds to 740–767; it reads IKPGMAFNSTGIINETSDHSEILDTTNS. 2 N-linked (GlcNAc...) asparagine glycosylation sites follow: Asn747 and Asn753. Residues 768 to 793 traverse the membrane as a helical segment; that stretch reads YLIKTCMILVFLSSIFGYCKEAGQIF. Ca(2+) is bound by residues Glu788 and Gln791. Topologically, residues 794–798 are cytoplasmic; that stretch reads QQKRN. The chain crosses the membrane as a helical span at residues 799–823; it reads YFMDISNVLEWIIYTTGIIFVLPLF. Asn805 and Glu808 together coordinate Ca(2+). At 824–829 the chain is on the extracellular side; the sequence is VEIPAH. A helical membrane pass occupies residues 830 to 850; it reads LQWQCGAIAVYFYWMNFLLYL. Topologically, residues 851 to 862 are cytoplasmic; it reads QRFENCGIFIVM. Cys856 is modified (cysteine sulfenic acid (-SOH); transient; in hyperoxia). A helical transmembrane segment spans residues 863-892; sequence LEVILKTLLRSTVVFIFLLLAFGLSFYILL. Residues 893–901 lie on the Extracellular side of the membrane; that stretch reads NLQDPFSSP. Positions 902–922 form an intramembrane region, pore-forming; the sequence is LLSIIQTFSMMLGDINYRESF. Over 923 to 933 the chain is Extracellular; it reads LEPYLRNELAH. A helical transmembrane segment spans residues 934–960; the sequence is PVLSFAQLVSFTIFVPIVLMNLLIGLA. Over 961–1119 the chain is Cytoplasmic; sequence VGDIAEVQKH…VKAKTHHLEP (159 aa). The stretch at 1042 to 1071 forms a coiled coil; that stretch reads MEILKQKYRLKDLTFLLEKQHELIKLIIQK. 1046–1052 contributes to the a 1,2-diacyl-sn-glycero-3-phospho-(1D-myo-inositol) binding site; the sequence is KQKYRLK.

The protein belongs to the transient receptor (TC 1.A.4) family. In terms of assembly, homotetramer. Interacts with TMEM100. Interacts with EGLN1. Interacts with the scorpion wasabi receptor toxin at the same site that electrophiles but in a non-covalent manner. Post-translationally, TRPA1 activation by electrophiles occurs though covalent modification of specific cysteine residues in the N-terminal cytoplasmic domain. Hydroxylation is required for TRPA1 activity inhibition in normoxia. In hypoxia, the decrease in oxygen concentration diminishes the activity of the hydroxylase EGLN1, thus relieving TRPA1 from inhibition and ultimately leading to channel activation. In terms of processing, oxidation of Cys-633 and Cys-856 in hyperoxia may override the hydroxylase EGLN1-mediated inhibition, causing TRPA1 activation.

The protein resides in the cell membrane. It carries out the reaction Ca(2+)(in) = Ca(2+)(out). The enzyme catalyses Mg(2+)(in) = Mg(2+)(out). It catalyses the reaction Na(+)(in) = Na(+)(out). The catalysed reaction is K(+)(in) = K(+)(out). It carries out the reaction Zn(2+)(in) = Zn(2+)(out). With respect to regulation, electrophilic ligands activate the channel by covalent modification of intracellular cysteines; Cys-621 plays a key role in covalent binding of electrophiles. Extracellular Ca(2+) both potentiates and inactivates TRPA1; a rapid potentiation follows by slow desensitization. Activated by increase in intracellular Ca(2+) concentration. Inhibited by the potent blocker of TRPV channels ruthenium red, A-967079, AP-18, HC-030031, and aryl sulfonamide derivative (S)-N-(4-chlorobenzyl)-1-((4-fluorophenyl)sulfonyl)pyrrolidine-2-carboxamide (ASD). Activated by benzyl isothiocyanate (BITC), iodoacetamide, sulfhydryl reactive agent MTSEA, N-methyl maleimide (NMM), N-ethylmaleimide (NEM), and 2-aminoethyldiphenylborinate (2-APB). Also activated by hyperoxia. Acivated by intracellular Zn(2+). TRPA1 activation may critically depend on the presence of small intracellular compounds such as polyphosphates. Ligand-activated Ca(2+)-permeable, nonselective cation channel involved in pain detection and possibly also in cold perception, oxygen concentration perception, cough, itch, and inner ear function. Has a relatively high Ca(2+) selectivity, with a preference for divalent over monovalent cations (Ca(2+) &gt; Ba(2+) &gt; Mg(2+) &gt; NH4(+) &gt; Li(+) &gt; K(+)), the influx of cation into the cytoplasm leads to membrane depolarization. Has a central role in the pain response to endogenous inflammatory mediators, such as bradykinin and to a diverse array of irritants. Activated by a large variety of structurally unrelated electrophilic and non-electrophilic chemical compounds, such as allylthiocyanate (AITC) from mustard oil or wasabi, cinnamaldehyde, diallyl disulfide (DADS) from garlic, and acrolein, an environmental irritant. Electrophilic ligands activate TRPA1 by interacting with critical N-terminal Cys residues in a covalent manner. Non-electrophile agonists bind at distinct sites in the transmembrane domain to promote channel activation. Also acts as an ionotropic cannabinoid receptor by being activated by delta(9)-tetrahydrocannabinol (THC), the psychoactive component of marijuana. May be a component for the mechanosensitive transduction channel of hair cells in inner ear, thereby participating in the perception of sounds. The polypeptide is Transient receptor potential cation channel subfamily A member 1 (Homo sapiens (Human)).